The following is a 419-amino-acid chain: Probable G-protein coupled receptor 63 (419 aa).

Over Met-1–Gln-81 the chain is Extracellular. Asn-16, Asn-28, and Asn-62 each carry an N-linked (GlcNAc...) asparagine glycan. Residues Ile-82–Leu-104 form a helical membrane-spanning segment. Topologically, residues Met-105–Ala-115 are cytoplasmic. Residues Ile-116–Ala-138 traverse the membrane as a helical segment. Over Leu-139–Ser-157 the chain is Extracellular. A helical transmembrane segment spans residues Ala-158–Ile-177. Over Asp-178–Lys-196 the chain is Cytoplasmic. The helical transmembrane segment at Val-197–Gly-216 threads the bilayer. Over Asn-217–Gln-240 the chain is Extracellular. A helical membrane pass occupies residues Ala-241–Met-263. Residues Gly-264–Thr-315 lie on the Cytoplasmic side of the membrane. A helical transmembrane segment spans residues Ile-316–Thr-338. The Extracellular segment spans residues Phe-339–Ile-352. The helical transmembrane segment at Ser-353–Ile-375 threads the bilayer. Residues Lys-376–Val-419 are Cytoplasmic-facing.

Belongs to the G-protein coupled receptor 1 family. As to expression, expressed in brain; detected in the frontal cortex, with lower levels in the thalamus, caudate, hypothalamus and midbrain.

Its subcellular location is the cell membrane. Its function is as follows. Orphan receptor. May play a role in brain function. The protein is Probable G-protein coupled receptor 63 (GPR63) of Homo sapiens (Human).